Consider the following 208-residue polypeptide: Glycerol-3-phosphate acyltransferase 1 (208 aa).

Transmembrane regions (helical) follow at residues 52 to 72 (VVLMDLAKGALAVSVAYYLLI), 77 to 97 (WVILTGFAAVIGHNWPIWLDF), 112 to 132 (FLLPVYGLPQHLLILALLVFI), 140 to 160 (IALATGIALFSLPFLVWYGSH), and 161 to 181 (SEFATLISVLLFLMIGIKFVL).

Belongs to the PlsY family. As to quaternary structure, probably interacts with PlsX.

The protein resides in the cell membrane. It catalyses the reaction an acyl phosphate + sn-glycerol 3-phosphate = a 1-acyl-sn-glycero-3-phosphate + phosphate. It participates in lipid metabolism; phospholipid metabolism. Functionally, catalyzes the transfer of an acyl group from acyl-phosphate (acyl-PO(4)) to glycerol-3-phosphate (G3P) to form lysophosphatidic acid (LPA). This enzyme utilizes acyl-phosphate as fatty acyl donor, but not acyl-CoA or acyl-ACP. The sequence is that of Glycerol-3-phosphate acyltransferase 1 from Dehalococcoides mccartyi (strain ATCC BAA-2266 / KCTC 15142 / 195) (Dehalococcoides ethenogenes (strain 195)).